Consider the following 147-residue polypeptide: MNREEVTDLIVTQKVKKKLTWAQLAEVVGHSKEWSTAALLGQMTLTEAQAKAIGTTLDLPEEAVTQLQVVPYKGSLPTAVPTDPLIYRFYELISVYGTTFKSLIHEEFGDGIMSAIDFNMDLTREADPKGDRVRITMSGKFLPYKTY.

Active-site residues include Arg88, Glu91, and Ser114.

Belongs to the cyanase family.

The catalysed reaction is cyanate + hydrogencarbonate + 3 H(+) = NH4(+) + 2 CO2. Its function is as follows. Catalyzes the reaction of cyanate with bicarbonate to produce ammonia and carbon dioxide. This is Cyanate hydratase from Dechloromonas aromatica (strain RCB).